The following is a 216-amino-acid chain: Orotate phosphoribosyltransferase (216 aa).

5-phospho-alpha-D-ribose 1-diphosphate is bound by residues Arg-101, Lys-105, His-107, and 127-135 (EDLISTGGS). Position 131 (Ser-131) interacts with orotate.

The protein belongs to the purine/pyrimidine phosphoribosyltransferase family. PyrE subfamily. In terms of assembly, homodimer. It depends on Mg(2+) as a cofactor.

It carries out the reaction orotidine 5'-phosphate + diphosphate = orotate + 5-phospho-alpha-D-ribose 1-diphosphate. It functions in the pathway pyrimidine metabolism; UMP biosynthesis via de novo pathway; UMP from orotate: step 1/2. Its function is as follows. Catalyzes the transfer of a ribosyl phosphate group from 5-phosphoribose 1-diphosphate to orotate, leading to the formation of orotidine monophosphate (OMP). The sequence is that of Orotate phosphoribosyltransferase from Cutibacterium acnes (strain DSM 16379 / KPA171202) (Propionibacterium acnes).